The chain runs to 31 residues: MSDIN-like toxin proprotein 8 (31 aa).

Positions 1-10 are excised as a propeptide; it reads MSDINTARLP. Residues 11–18 constitute a cross-link (cyclopeptide (Cys-Pro)); that stretch reads CIGFLGIP. Residues 19–31 constitute a propeptide that is removed on maturation; that stretch reads SVGDDIEMVLRHG.

The protein belongs to the MSDIN fungal toxin family. In terms of processing, processed by the macrocyclase-peptidase enzyme POPB to yield a toxic cyclic octapeptide. POPB first removes 10 residues from the N-terminus. Conformational trapping of the remaining peptide forces the enzyme to release this intermediate rather than proceed to macrocyclization. The enzyme rebinds the remaining peptide in a different conformation and catalyzes macrocyclization of the N-terminal 8 residues.

Its function is as follows. Probable toxin that belongs to the MSDIN-like toxin family responsible for a large number of food poisoning cases and deaths. This Amanita bisporigera (Destroying angel) protein is MSDIN-like toxin proprotein 8.